Consider the following 182-residue polypeptide: Superoxide dismutase [Cu-Zn] (182 aa).

Positions 1–19 (MFRTLTVVPLLALGLSLSA) are cleaved as a signal peptide. A lipid anchor (N-palmitoyl cysteine) is attached at C20. C20 carries the S-diacylglycerol cysteine lipid modification. Cu cation contacts are provided by H69, H71, and H95. The cysteines at positions 76 and 175 are disulfide-linked. Positions 91 to 118 (AAGGHFDPGASHNHDGPHARNDQGHGGD) are disordered. Residues H95, H104, H115, and D118 each coordinate Zn(2+). Basic and acidic residues predominate over residues 102–115 (HNHDGPHARNDQGH).

The protein belongs to the Cu-Zn superoxide dismutase family. Cu cation serves as cofactor. Requires Zn(2+) as cofactor.

The protein resides in the cell membrane. The enzyme catalyses 2 superoxide + 2 H(+) = H2O2 + O2. In terms of biological role, destroys radicals which are normally produced within the cells and which are toxic to biological systems. This Deinococcus radiodurans (strain ATCC 13939 / DSM 20539 / JCM 16871 / CCUG 27074 / LMG 4051 / NBRC 15346 / NCIMB 9279 / VKM B-1422 / R1) protein is Superoxide dismutase [Cu-Zn] (sodC).